Here is a 494-residue protein sequence, read N- to C-terminus: UPF0371 protein SSA_0208 (494 aa).

It belongs to the UPF0371 family.

This is UPF0371 protein SSA_0208 from Streptococcus sanguinis (strain SK36).